A 257-amino-acid polypeptide reads, in one-letter code: NAD-capped RNA hydrolase NudC (257 aa).

Arg-69 contacts substrate. Positions 98 and 101 each coordinate Zn(2+). Glu-111 contributes to the substrate binding site. Zn(2+) contacts are provided by Cys-116 and Cys-119. Substrate is bound at residue Tyr-124. One can recognise a Nudix hydrolase domain in the interval 125 to 248; the sequence is PQIAPCIIVA…TVARRLIEDT (124 aa). A divalent metal cation is bound by residues Ala-158, Glu-174, and Glu-178. Residues 159–180 carry the Nudix box motif; sequence GFVEVGETLEQAVAREVMEESG. Position 192-199 (192-199) interacts with substrate; sequence QPWPFPQS. Position 219 (Glu-219) interacts with a divalent metal cation. Ala-241 is a substrate binding site.

This sequence belongs to the Nudix hydrolase family. NudC subfamily. As to quaternary structure, homodimer. Requires Mg(2+) as cofactor. The cofactor is Mn(2+). Zn(2+) is required as a cofactor.

The catalysed reaction is a 5'-end NAD(+)-phospho-ribonucleoside in mRNA + H2O = a 5'-end phospho-adenosine-phospho-ribonucleoside in mRNA + beta-nicotinamide D-ribonucleotide + 2 H(+). It carries out the reaction NAD(+) + H2O = beta-nicotinamide D-ribonucleotide + AMP + 2 H(+). The enzyme catalyses NADH + H2O = reduced beta-nicotinamide D-ribonucleotide + AMP + 2 H(+). In terms of biological role, mRNA decapping enzyme that specifically removes the nicotinamide adenine dinucleotide (NAD) cap from a subset of mRNAs by hydrolyzing the diphosphate linkage to produce nicotinamide mononucleotide (NMN) and 5' monophosphate mRNA. The NAD-cap is present at the 5'-end of some mRNAs and stabilizes RNA against 5'-processing. Has preference for mRNAs with a 5'-end purine. Catalyzes the hydrolysis of a broad range of dinucleotide pyrophosphates. The polypeptide is NAD-capped RNA hydrolase NudC (Salmonella heidelberg (strain SL476)).